The primary structure comprises 380 residues: DNA replication and repair protein RecF (380 aa).

30–37 (GNNAQGKS) provides a ligand contact to ATP.

It belongs to the RecF family.

The protein resides in the cytoplasm. In terms of biological role, the RecF protein is involved in DNA metabolism; it is required for DNA replication and normal SOS inducibility. RecF binds preferentially to single-stranded, linear DNA. It also seems to bind ATP. In Rippkaea orientalis (strain PCC 8801 / RF-1) (Cyanothece sp. (strain PCC 8801)), this protein is DNA replication and repair protein RecF.